The primary structure comprises 553 residues: Transcription factor GAMYB (553 aa).

A compositionally biased stretch (basic and acidic residues) spans 1–17 (MYRVKSESDCDMIHQEQ). The segment at 1–45 (MYRVKSESDCDMIHQEQMDSPVADDGSSGGSPHRGGGPPLKKGPW) is disordered. The segment covering 27-38 (SSGGSPHRGGGP) has biased composition (gly residues). HTH myb-type domains follow at residues 37 to 89 (GPPL…ANHL) and 90 to 144 (RPNL…KRCQ). 2 consecutive DNA-binding regions (H-T-H motif) follow at residues 65-89 (WNAV…ANHL) and 117-140 (WARM…NTRI). Residues 464 to 489 (PAQSTSMGSGEQVMGPKYEPGDTSPH) are disordered.

As to quaternary structure, interacts with MYBS1. Expressed in aleurone cells, inflorescence shoot apical region, stamen primordia, and tapetum cells of the anther. Expressed at low level in roots and vegetative shoots.

It is found in the nucleus. Its function is as follows. Transcriptional activator of gibberellin-dependent alpha-amylase expression in aleurone cells. Involved in pollen and floral organs development. May bind to the 5'-TAACAAA-3' box of alpha-amylase promoter. Required for anther development. Functions in parallel with UDT1 to regulate early anther development. Functions upstream of the transcription factor TDR and may positively regulate its transcription. Required for pollen development. Probably required for controlling tapetal cell size and promoting tapetal programmed cell death (PCD) during anther development. Required for exine and Ubisch body formation in anthers. Interacts with the DNA specific motifs of giberrellin-up-regulated genes of anthers and regulates their expression. Positively regulates the expression of the laurate hydroxylase CYP703A3, known to be essential for the development of pollen exine and anther epicuticular layer. Functions with MYBS1 to integrate diverse nutrient starvation and gibberellin (GA) signaling pathways during germination of grains. Sugar, nitrogen and phosphate starvation signals converge and interconnect with GA to promote the co-nuclear import of GAMYB and MYBS1, resulting in the expression of a large set of GA-inducible hydrolases, transporters and regulators that are essential for mobilization of nutrient reserves in the endosperm to support seedling growth. This chain is Transcription factor GAMYB, found in Oryza sativa subsp. japonica (Rice).